The chain runs to 354 residues: CX3C chemokine receptor 1 (354 aa).

Topologically, residues 1 to 32 (MPTSFPELDLENFEYDDSAEACYLGDIVAFGT) are extracellular. A helical transmembrane segment spans residues 33–60 (IFLSIFYSLVFTFGLVGNLLVVLALTNS). At 61–70 (RKSKSITDIY) the chain is on the cytoplasmic side. The helical transmembrane segment at 71–91 (LLNLALSDLLFVATLPFWTHY) threads the bilayer. The Extracellular segment spans residues 92–104 (LISHEGLHNAMCK). Cysteine 103 and cysteine 176 form a disulfide bridge. The helical transmembrane segment at 105–126 (LTTAFFFIGFFGGIFFITVISI) threads the bilayer. Residues 127 to 143 (DRYLAIVLAANSMNNRT) are Cytoplasmic-facing. Residues 144–168 (VQHGVTISLGVWAAAILVASPQFMF) traverse the membrane as a helical segment. The Extracellular portion of the chain corresponds to 169 to 196 (TKRKDNECLGDYPEVLQEIWPVLRNSEV). The chain crosses the membrane as a helical span at residues 197–216 (NILGFVLPLLIMSFCYFRIV). Topologically, residues 217–232 (RTLFSCKNRKKARAIR) are cytoplasmic. The helical transmembrane segment at 233–257 (LILLVVVVFFLFWTPYNIVIFLETL) threads the bilayer. At 258–274 (KFYNFFPSCGMKRDLRW) the chain is on the extracellular side. The helical transmembrane segment at 275-298 (ALSVTETVAFSHCCLNPFIYAFAG) threads the bilayer. Residues 299 to 354 (EKFRRYLRHLYNKCLAVLCGRPVHAGFSTESQRSRQDSILSSLTHYTSEGEGSLLL) lie on the Cytoplasmic side of the membrane. Threonine 345 is subject to Phosphothreonine.

It belongs to the G-protein coupled receptor 1 family. Found in a ternary complex with CX3CL1 and ITGAV:ITGB3 or ITGA4:ITGB1. This protein is not N-glycosylated which is unusual for G-protein-coupled receptors. As to expression, most abundant in adult spinal cord, brain, kidney, gut, uterus and testes.

It is found in the cell membrane. In terms of biological role, receptor for the C-X3-C chemokine fractalkine (CX3CL1) present on many early leukocyte cells; CX3CR1-CX3CL1 signaling exerts distinct functions in different tissue compartments, such as immune response, inflammation, cell adhesion and chemotaxis. CX3CR1-CX3CL1 signaling mediates cell migratory functions. Responsible for the recruitment of natural killer (NK) cells to inflamed tissues. Acts as a regulator of inflammation process leading to atherogenesis by mediating macrophage and monocyte recruitment to inflamed atherosclerotic plaques, promoting cell survival. Involved in airway inflammation by promoting interleukin 2-producing T helper (Th2) cell survival in inflamed lung. Involved in the migration of circulating monocytes to non-inflamed tissues, where they differentiate into macrophages and dendritic cells. Acts as a negative regulator of angiogenesis, probably by promoting macrophage chemotaxis. Plays a key role in brain microglia by regulating inflammatory response in the central nervous system (CNS) and regulating synapse maturation. Required to restrain the microglial inflammatory response in the CNS and the resulting parenchymal damage in response to pathological stimuli. Involved in brain development by participating in synaptic pruning, a natural process during which brain microglia eliminates extra synapses during postnatal development. Synaptic pruning by microglia is required to promote the maturation of circuit connectivity during brain development. Acts as an important regulator of the gut microbiota by controlling immunity to intestinal bacteria and fungi. Expressed in lamina propria dendritic cells in the small intestine, which form transepithelial dendrites capable of taking up bacteria in order to provide defense against pathogenic bacteria. Required to initiate innate and adaptive immune responses against dissemination of commensal fungi (mycobiota) component of the gut: expressed in mononuclear phagocytes (MNPs) and acts by promoting induction of antifungal IgG antibodies response to confer protection against disseminated C.albicans or C.auris infection. Also acts as a receptor for C-C motif chemokine CCL26, inducing cell chemotaxis. In Rattus norvegicus (Rat), this protein is CX3C chemokine receptor 1.